Reading from the N-terminus, the 226-residue chain is Lipoprotein-releasing system ATP-binding protein LolD (226 aa).

One can recognise an ABC transporter domain in the interval 5-225 (LELVEIERHF…TLKEKKIVEL (221 aa)). 41–48 (APSGAGKS) contributes to the ATP binding site.

It belongs to the ABC transporter superfamily. Lipoprotein translocase (TC 3.A.1.125) family. In terms of assembly, the complex is composed of two ATP-binding proteins (LolD) and two transmembrane proteins (LolC and LolE).

It localises to the cell inner membrane. Functionally, part of the ABC transporter complex LolCDE involved in the translocation of mature outer membrane-directed lipoproteins, from the inner membrane to the periplasmic chaperone, LolA. Responsible for the formation of the LolA-lipoprotein complex in an ATP-dependent manner. The sequence is that of Lipoprotein-releasing system ATP-binding protein LolD from Bartonella quintana (strain Toulouse) (Rochalimaea quintana).